The following is a 263-amino-acid chain: Purine nucleoside phosphorylase SAR1163 (263 aa).

His-79, Cys-124, and His-141 together coordinate Zn(2+).

The protein belongs to the purine nucleoside phosphorylase YfiH/LACC1 family. In terms of assembly, homodimer. Requires Cu(2+) as cofactor. It depends on Zn(2+) as a cofactor.

The catalysed reaction is adenosine + phosphate = alpha-D-ribose 1-phosphate + adenine. It catalyses the reaction S-methyl-5'-thioadenosine + phosphate = 5-(methylsulfanyl)-alpha-D-ribose 1-phosphate + adenine. The enzyme catalyses inosine + phosphate = alpha-D-ribose 1-phosphate + hypoxanthine. It carries out the reaction adenosine + H2O + H(+) = inosine + NH4(+). Functionally, purine nucleoside enzyme that catalyzes the phosphorolysis of adenosine and inosine nucleosides, yielding D-ribose 1-phosphate and the respective free bases, adenine and hypoxanthine. Also catalyzes the phosphorolysis of S-methyl-5'-thioadenosine into adenine and S-methyl-5-thio-alpha-D-ribose 1-phosphate. Also has adenosine deaminase activity. This is Purine nucleoside phosphorylase SAR1163 from Staphylococcus aureus (strain MRSA252).